The primary structure comprises 251 residues: Duodenase-1 (251 aa).

Positions 1–17 (MVLLLLLVALLSPTGEA) are cleaved as a signal peptide. The propeptide occupies 18–19 (GK). Residues 20–242 (IIGGHEAKPH…SFLSWIHSTM (223 aa)) enclose the Peptidase S1 domain. The cysteines at positions 48 and 64 are disulfide-linked. Catalysis depends on histidine 63, which acts as the Charge relay system. N-linked (GlcNAc...) asparagine glycosylation occurs at asparagine 70. Aspartate 107 (charge relay system) is an active-site residue. Cystine bridges form between cysteine 141–cysteine 207 and cysteine 172–cysteine 186. The active-site Charge relay system is the serine 201.

The protein belongs to the peptidase S1 family. Monomer.

Functionally, protease which has both trypsin-like and chymotrypsin-like activities. Shows a preferential cleavage after Lys, Arg, Tyr, Phe, and Leu residues. This chain is Duodenase-1 (BDMD1), found in Bos taurus (Bovine).